Reading from the N-terminus, the 122-residue chain is Large ribosomal subunit protein uL14 (122 aa).

Belongs to the universal ribosomal protein uL14 family. As to quaternary structure, part of the 50S ribosomal subunit. Forms a cluster with proteins L3 and L19. In the 70S ribosome, L14 and L19 interact and together make contacts with the 16S rRNA in bridges B5 and B8.

Functionally, binds to 23S rRNA. Forms part of two intersubunit bridges in the 70S ribosome. The sequence is that of Large ribosomal subunit protein uL14 from Halalkalibacterium halodurans (strain ATCC BAA-125 / DSM 18197 / FERM 7344 / JCM 9153 / C-125) (Bacillus halodurans).